The sequence spans 84 residues: U4-theraphotoxin-Hhn1n (84 aa).

Positions 1–22 are cleaved as a signal peptide; sequence MKVTLIAILTCAAVLVLHTTAA. The propeptide occupies 23–47; that stretch reads EELEESQLMEVGMPDTELAAVDEER. 3 disulfide bridges follow: C51-C65, C55-C76, and C70-C81.

Belongs to the neurotoxin 12 (Hwtx-2) family. 02 (Hwtx-2) subfamily. In terms of tissue distribution, expressed by the venom gland.

It localises to the secreted. Its function is as follows. Postsynaptic neurotoxin. This chain is U4-theraphotoxin-Hhn1n, found in Cyriopagopus hainanus (Chinese bird spider).